Consider the following 241-residue polypeptide: Probable transcriptional regulatory protein lin1570 (241 aa).

Polar residues predominate over residues 1 to 14 (MAGHSKWNNIQGRK). Positions 1 to 22 (MAGHSKWNNIQGRKNAQDSKRS) are disordered.

Belongs to the TACO1 family.

Its subcellular location is the cytoplasm. This is Probable transcriptional regulatory protein lin1570 from Listeria innocua serovar 6a (strain ATCC BAA-680 / CLIP 11262).